The following is a 155-amino-acid chain: Anaerobic ribonucleoside-triphosphate reductase-activating protein (155 aa).

Residues Cys26, Cys30, and Cys33 each coordinate [4Fe-4S] cluster. Residues Gly32–Tyr34 and Gly74 each bind S-adenosyl-L-methionine.

Belongs to the organic radical-activating enzymes family. Forms a tetramer composed of two NrdD and two NrdG subunits. It depends on [4Fe-4S] cluster as a cofactor.

The protein resides in the cytoplasm. It catalyses the reaction glycyl-[protein] + reduced [flavodoxin] + S-adenosyl-L-methionine = glycin-2-yl radical-[protein] + semiquinone [flavodoxin] + 5'-deoxyadenosine + L-methionine + H(+). In terms of biological role, activation of anaerobic ribonucleoside-triphosphate reductase under anaerobic conditions by generation of an organic free radical, using S-adenosylmethionine and reduced flavodoxin as cosubstrates to produce 5'-deoxy-adenosine. This is Anaerobic ribonucleoside-triphosphate reductase-activating protein (nrdG) from Haemophilus influenzae (strain ATCC 51907 / DSM 11121 / KW20 / Rd).